The primary structure comprises 925 residues: Serine/threonine-protein kinase PLK4 (925 aa).

The region spanning 12–265 (FKVGNLLGKG…LSSVLDHPFM (254 aa)) is the Protein kinase domain. Residues 18–26 (LGKGSFAGV) and K41 each bind ATP. N6-acetyllysine occurs at positions 45 and 46. D136 serves as the catalytic Proton acceptor. 2 disordered regions span residues 262–283 (HPFMSRNPSPKSKDVGTVEDSM) and 328–394 (KNSS…KTYS). Residues 330 to 341 (SSDFSSGDGSNF) show a composition bias toward low complexity. The span at 342-353 (CTQWGNPEQEAN) shows a compositional bias: polar residues. Residues 359 to 369 (RVIEDAEERPH) show a composition bias toward basic and acidic residues. Residues 381–391 (RASPSNQSRAK) show a composition bias toward polar residues. S400 carries the phosphoserine modification. The disordered stretch occupies residues 517 to 538 (EVMPQEPGLHPHSEQSKNRSME). Residues 525–536 (LHPHSEQSKNRS) are compositionally biased toward basic and acidic residues. Residues 547 to 660 (TLRSITSPLI…SRFIQLVRSK (114 aa)) enclose the Cryptic POLO box 1 (CPB1) domain. The Cryptic POLO box 2 (CPB2) domain occupies 661–774 (TPKITYFTRY…GRKPGNTSSP (114 aa)). Phosphoserine is present on S778. In terms of domain architecture, POLO box spans 841-919 (QLLKSVFVKN…LSSILLMFSN (79 aa)).

It belongs to the protein kinase superfamily. Ser/Thr protein kinase family. CDC5/Polo subfamily. Homodimer. Interacts with CEP152 (via N-terminus). Interacts with CEP78; this interaction may be important for proper PLK4 localization to the centriole and PLK4-induced overduplication of centrioles. Interacts with CEP131. Interacts simultaneously with TENT5C and CEP192. Interacts with TENT5C; this interaction leads to the TENT5C recruitment in the centrosome. Interacts with CEP85; this interaction may be important in cell migration and centriole assembly. In terms of processing, ubiquitinated; leading to its degradation by the proteasome. Deubiquitinated by USP54; leading to PLK4 stabilization. Post-translationally, tyrosine-phosphorylated by TEC. Acetylation by KAT2A and KAT2B impairs kinase activity by shifting the kinase to an inactive conformation. Expressed in tissues associated with mitotic and meiotic cell division. Highly expressed in testis.

Its subcellular location is the cytoplasm. The protein localises to the cytoskeleton. It localises to the microtubule organizing center. The protein resides in the centrosome. It is found in the centriole. Its subcellular location is the nucleus. The protein localises to the nucleolus. It localises to the cleavage furrow. It carries out the reaction L-seryl-[protein] + ATP = O-phospho-L-seryl-[protein] + ADP + H(+). The enzyme catalyses L-threonyl-[protein] + ATP = O-phospho-L-threonyl-[protein] + ADP + H(+). In terms of biological role, serine/threonine-protein kinase that plays a central role in centriole duplication. Able to trigger procentriole formation on the surface of the parental centriole cylinder, leading to the recruitment of centriole biogenesis proteins such as SASS6, CPAP, CCP110, CEP135 and gamma-tubulin. When overexpressed, it is able to induce centrosome amplification through the simultaneous generation of multiple procentrioles adjoining each parental centriole during S phase. Phosphorylates 'Ser-151' of FBXW5 during the G1/S transition, leading to inhibit FBXW5 ability to ubiquitinate SASS6. Its central role in centriole replication suggests a possible role in tumorigenesis, centrosome aberrations being frequently observed in tumors. Phosphorylates CDC25C and CHEK2. Also involved in deuterosome-mediated centriole amplification in multiciliated that can generate more than 100 centrioles. Also involved in trophoblast differentiation by phosphorylating HAND1, leading to disrupt the interaction between HAND1 and MDFIC and activate HAND1. Required for the recruitment of STIL to the centriole and for STIL-mediated centriole amplification. Phosphorylates CEP131 at 'Ser-78' and PCM1 at 'Ser-372' which is essential for proper organization and integrity of centriolar satellites. This chain is Serine/threonine-protein kinase PLK4, found in Mus musculus (Mouse).